A 332-amino-acid polypeptide reads, in one-letter code: Biotin synthase (332 aa).

The region spanning 53 to 282 is the Radical SAM core domain; sequence HFGKKVKLNM…TKEIRISGGR (230 aa). [4Fe-4S] cluster-binding residues include C71, C75, and C78. [2Fe-2S] cluster is bound by residues C115, C147, C207, and R277.

Belongs to the radical SAM superfamily. Biotin synthase family. As to quaternary structure, homodimer. The cofactor is [4Fe-4S] cluster. [2Fe-2S] cluster is required as a cofactor.

The catalysed reaction is (4R,5S)-dethiobiotin + (sulfur carrier)-SH + 2 reduced [2Fe-2S]-[ferredoxin] + 2 S-adenosyl-L-methionine = (sulfur carrier)-H + biotin + 2 5'-deoxyadenosine + 2 L-methionine + 2 oxidized [2Fe-2S]-[ferredoxin]. Its pathway is cofactor biosynthesis; biotin biosynthesis; biotin from 7,8-diaminononanoate: step 2/2. Functionally, catalyzes the conversion of dethiobiotin (DTB) to biotin by the insertion of a sulfur atom into dethiobiotin via a radical-based mechanism. This Bacillus cereus (strain B4264) protein is Biotin synthase.